Reading from the N-terminus, the 404-residue chain is MSQTRYFFTSESVSEGHPDKVADQISDAVLDDFLRQDSSSRVACETFVTTGQVIVGGEVTTKGIVDIQTIARKVVTEIGYTKSEYMFEANSCGVLSALHSQSPDINRGVDRKEEIADEFDRVGAGDQGMMFGYACTETPVLMPAAIQFAQHLMKKLAEIRKEGKIMTYLRPDAKSQVTLEYENEVVKRVDAVVVSTQHDPEPEGVSEAAWQEVIKNDIIENVIKVVIPADLIDENTKFHINPTGRFVIGGPHGDTGLTGRKIIVDTYGGAAPHGGGAFSGKDPSKVDRSAAYAARHVAKNIVAAGLADKCTVQVSYAIGVARPVSIYINTHDTAKHGLNDAQIQEKAELIFDLRPAAIIKRFSLNKPEGWCYQQTAAYGHFGRDIFPWEKTEKVGELKSALNLA.

An ATP-binding site is contributed by histidine 17. Aspartate 19 is a Mg(2+) binding site. Glutamate 45 provides a ligand contact to K(+). Residues glutamate 58 and glutamine 101 each contribute to the L-methionine site. Residues glutamine 101–arginine 111 are flexible loop. Residues aspartate 172 to lysine 174, arginine 245 to phenylalanine 246, aspartate 254, arginine 260 to lysine 261, alanine 277, and lysine 281 each bind ATP. Aspartate 254 is an L-methionine binding site. Lysine 285 lines the L-methionine pocket.

It belongs to the AdoMet synthase family. In terms of assembly, homotetramer; dimer of dimers. Mg(2+) is required as a cofactor. It depends on K(+) as a cofactor.

The protein localises to the cytoplasm. The enzyme catalyses L-methionine + ATP + H2O = S-adenosyl-L-methionine + phosphate + diphosphate. It participates in amino-acid biosynthesis; S-adenosyl-L-methionine biosynthesis; S-adenosyl-L-methionine from L-methionine: step 1/1. Catalyzes the formation of S-adenosylmethionine (AdoMet) from methionine and ATP. The overall synthetic reaction is composed of two sequential steps, AdoMet formation and the subsequent tripolyphosphate hydrolysis which occurs prior to release of AdoMet from the enzyme. This Pelodictyon phaeoclathratiforme (strain DSM 5477 / BU-1) protein is S-adenosylmethionine synthase.